Here is a 262-residue protein sequence, read N- to C-terminus: MAVGKNKRTSKGKKGGKKKVTDVFTKKEWYDLKAPKMFLVRNFGKTLVTKTIGKKLATDGLKGRIYEVNLADLNNDEDQAHKKIKLCCDHIINKDCYTDFCGLSITRDKLCSLIRKGYTLIEGYTDVKTIDNYQLRMFCIAFTKKRPNQTKTTCYAQTSQIKKIRKKMVDIMNAEASKVLLKDLVKKFIPESIGKEVEKQCKKIYPLQNVLIRKVKILKRPKLDISKLMELHTDSKEDAGKNVKSLPESKEATNILSAELKH.

The protein belongs to the eukaryotic ribosomal protein eS1 family. In terms of assembly, component of the small ribosomal subunit. Mature ribosomes consist of a small (40S) and a large (60S) subunit. The 40S subunit contains about 33 different proteins and 1 molecule of RNA (18S). The 60S subunit contains about 49 different proteins and 3 molecules of RNA (25S, 5.8S and 5S).

Its subcellular location is the cytoplasm. The protein is Small ribosomal subunit protein eS1 of Plasmodium knowlesi (strain H).